Consider the following 289-residue polypeptide: 4-diphosphocytidyl-2-C-methyl-D-erythritol kinase (289 aa).

Residue K16 is part of the active site. Position 99-109 (P99–S109) interacts with ATP. Residue D141 is part of the active site.

This sequence belongs to the GHMP kinase family. IspE subfamily.

It carries out the reaction 4-CDP-2-C-methyl-D-erythritol + ATP = 4-CDP-2-C-methyl-D-erythritol 2-phosphate + ADP + H(+). Its pathway is isoprenoid biosynthesis; isopentenyl diphosphate biosynthesis via DXP pathway; isopentenyl diphosphate from 1-deoxy-D-xylulose 5-phosphate: step 3/6. Functionally, catalyzes the phosphorylation of the position 2 hydroxy group of 4-diphosphocytidyl-2C-methyl-D-erythritol. In Ralstonia nicotianae (strain ATCC BAA-1114 / GMI1000) (Ralstonia solanacearum), this protein is 4-diphosphocytidyl-2-C-methyl-D-erythritol kinase.